Consider the following 526-residue polypeptide: MGSSKSKPKGPSQRRRSLEPPDSTHHGGFPASQTPNKTAAPDTHRTPSRSFGTVATEPKLFGDFNTSDTVTSPQRAGALAGGVTTFVALYDYESWIETDLSFKKGERLQIVNNTEGNWWLAHSVTTGQTGYIPSNYVAPSDSIQAEEWYFGKITRRESERLLLNPENPRGTFLVRESETTKGAYCLSVSDFDNAKGLNVKHYKIRKLDSGGFYITSRTQFSSLQQLVAYYSKHADGLCHRLTNVCPTSKPQTQGLAKDAWEIPRESLRLEVKLGQGCFGEVWMGTWNGTTRVAIKTLKPGTMSPEAFLQEAQVMKKLRHKKLVQLYAVVSEEPIYIVIEYMSKGSLLDFLKGEMGKYLRLPQLVDMAAQIASGMAYVERMNYVHRDLRAANILVGENLVCKVADFGLARLIEDNEYTARQGAKFPIKWTAPEAALYGRFTIKSDVWSFGILLTELTTKGRVPYPGMGNGEVLDRVERGYRMPCPPECPESLHDLMSQCWRRDPEERPTFEYLQAQLLPACVLEVAE.

Positions 1–15 are enriched in basic residues; that stretch reads MGSSKSKPKGPSQRR. Positions 1–59 are disordered; it reads MGSSKSKPKGPSQRRRSLEPPDSTHHGGFPASQTPNKTAAPDTHRTPSRSFGTVATEPK. A lipid anchor (N-myristoyl glycine; by host) is attached at G2. The span at 16 to 25 shows a compositional bias: basic and acidic residues; the sequence is RSLEPPDSTH. Residues 81-142 form the SH3 domain; that stretch reads GGVTTFVALY…PSNYVAPSDS (62 aa). The region spanning 148 to 245 is the SH2 domain; it reads WYFGKITRRE…GLCHRLTNVC (98 aa). In terms of domain architecture, Protein kinase spans 267-517; the sequence is LRLEVKLGQG…TFEYLQAQLL (251 aa). ATP-binding positions include 273-281 and K295; that span reads LGQGCFGEV. D386 acts as the Proton acceptor in catalysis. A Phosphotyrosine; by autocatalysis modification is found at Y416.

The protein belongs to the protein kinase superfamily. Tyr protein kinase family. SRC subfamily. In terms of assembly, homodimer. In terms of processing, the phosphorylated form is termed pp60v-src.

It catalyses the reaction L-tyrosyl-[protein] + ATP = O-phospho-L-tyrosyl-[protein] + ADP + H(+). Its function is as follows. This phosphoprotein, required for both the initiation and the maintenance of neoplastic transformation, is a protein kinase that catalyzes the phosphorylation of tyrosine residues in vitro. In Rous sarcoma virus subgroup E (strain Schmidt-Ruppin) (RSV-SR-E), this protein is Tyrosine-protein kinase transforming protein Src (V-SRC).